A 182-amino-acid chain; its full sequence is MKKHLLFLGAPGAGKGTQAELLSQTTSYLHLSTGELLRKEIEMNTNLGIQVKDIMNRGELVSDELVLKIVRQNLVKDNIGWILDGYPRNLSQADSLNEVLSEINQPLEVVFYLDIPEEVLIERLLLRGRKDDTEETIRTRVDIYKKTTEPLIQYFKDLSLLEYINADRDLKTISSDIKQKMA.

12–17 (GAGKGT) lines the ATP pocket. Positions 32–61 (STGELLRKEIEMNTNLGIQVKDIMNRGELV) are NMP. AMP contacts are provided by residues threonine 33, arginine 38, 59 to 61 (ELV), 85 to 88 (GYPR), and glutamine 92. The interval 126 to 132 (LRGRKDD) is LID. Arginine 127 is an ATP binding site. AMP is bound by residues arginine 129 and arginine 140. Arginine 168 is an ATP binding site.

This sequence belongs to the adenylate kinase family. As to quaternary structure, monomer.

It is found in the cytoplasm. The enzyme catalyses AMP + ATP = 2 ADP. The protein operates within purine metabolism; AMP biosynthesis via salvage pathway; AMP from ADP: step 1/1. In terms of biological role, catalyzes the reversible transfer of the terminal phosphate group between ATP and AMP. Plays an important role in cellular energy homeostasis and in adenine nucleotide metabolism. This is Adenylate kinase from Prochlorococcus marinus (strain AS9601).